Reading from the N-terminus, the 343-residue chain is MKLKTKTMEWSGDSLKLLDQRKLPFIEEYVECKTHEEVAHAIKEMIVRGAPAIGVTAAFGYVLGLRDYKTGSLTDWMKQVKETLARTRPTAVNLFWALNRMEKVFFENVDRENLFEILENEALKMAYEDIEVNKAIGKNGAQLIKDGSTILTHCNAGALATVDYGTALGVIRAAMESGKRIRVFADETRPYLQGARLTAWELMKDGIEVYVITDNMAGWLMKKGLIDAVVVGADRIALNGDTANKIGTYSLAVLAKRNNIPFYVAAPVSTIDPTIKSGEEIPIEERRPEEVTHCGGNRIAPEGVKVLNPAFDVTENTLITAIITEKGVIRPPFEENIKKILGV.

Substrate-binding positions include 48 to 50, R88, and Q193; that span reads RGA. D234 (proton donor) is an active-site residue. 244-245 contributes to the substrate binding site; the sequence is NK.

This sequence belongs to the eIF-2B alpha/beta/delta subunits family. MtnA subfamily.

The catalysed reaction is 5-(methylsulfanyl)-alpha-D-ribose 1-phosphate = 5-(methylsulfanyl)-D-ribulose 1-phosphate. The protein operates within amino-acid biosynthesis; L-methionine biosynthesis via salvage pathway; L-methionine from S-methyl-5-thio-alpha-D-ribose 1-phosphate: step 1/6. Catalyzes the interconversion of methylthioribose-1-phosphate (MTR-1-P) into methylthioribulose-1-phosphate (MTRu-1-P). This chain is Methylthioribose-1-phosphate isomerase, found in Thermotoga petrophila (strain ATCC BAA-488 / DSM 13995 / JCM 10881 / RKU-1).